The sequence spans 140 residues: Large ribosomal subunit protein uL11 (140 aa).

Belongs to the universal ribosomal protein uL11 family. As to quaternary structure, part of the ribosomal stalk of the 50S ribosomal subunit. Interacts with L10 and the large rRNA to form the base of the stalk. L10 forms an elongated spine to which L12 dimers bind in a sequential fashion forming a multimeric L10(L12)X complex. In terms of processing, one or more lysine residues are methylated.

Forms part of the ribosomal stalk which helps the ribosome interact with GTP-bound translation factors. In Staphylococcus saprophyticus subsp. saprophyticus (strain ATCC 15305 / DSM 20229 / NCIMB 8711 / NCTC 7292 / S-41), this protein is Large ribosomal subunit protein uL11.